A 510-amino-acid chain; its full sequence is Probable cytosol aminopeptidase (510 aa).

Mn(2+) is bound by residues Lys-282 and Asp-287. The active site involves Lys-294. Residues Asp-305, Asp-364, and Glu-366 each contribute to the Mn(2+) site. Residue Arg-368 is part of the active site.

Belongs to the peptidase M17 family. Mn(2+) serves as cofactor.

The protein localises to the cytoplasm. It carries out the reaction Release of an N-terminal amino acid, Xaa-|-Yaa-, in which Xaa is preferably Leu, but may be other amino acids including Pro although not Arg or Lys, and Yaa may be Pro. Amino acid amides and methyl esters are also readily hydrolyzed, but rates on arylamides are exceedingly low.. The catalysed reaction is Release of an N-terminal amino acid, preferentially leucine, but not glutamic or aspartic acids.. Its function is as follows. Presumably involved in the processing and regular turnover of intracellular proteins. Catalyzes the removal of unsubstituted N-terminal amino acids from various peptides. This Cupriavidus metallidurans (strain ATCC 43123 / DSM 2839 / NBRC 102507 / CH34) (Ralstonia metallidurans) protein is Probable cytosol aminopeptidase.